Reading from the N-terminus, the 1483-residue chain is Chromosome partition protein MukB (1483 aa).

Residue 34 to 41 (GGNGAGKS) coordinates ATP. Coiled-coil stretches lie at residues 326 to 418 (LEAD…QYNQ), 444 to 480 (LETF…QAYQ), 509 to 601 (RHLA…MQRA), 780 to 804 (RAAC…FATL), 837 to 923 (EIRQ…AKLE), 977 to 1115 (EMLS…TAKA), and 1209 to 1265 (VEAI…LQNV). The flexible hinge stretch occupies residues 666-783 (PGGSEDQRLN…EVPLFGRAAC (118 aa)).

This sequence belongs to the SMC family. MukB subfamily. Homodimerization via its hinge domain. Binds to DNA via its C-terminal region. Interacts, and probably forms a ternary complex, with MukE and MukF via its C-terminal region. The complex formation is stimulated by calcium or magnesium. Interacts with tubulin-related protein FtsZ.

Its subcellular location is the cytoplasm. It localises to the nucleoid. In terms of biological role, plays a central role in chromosome condensation, segregation and cell cycle progression. Functions as a homodimer, which is essential for chromosome partition. Involved in negative DNA supercoiling in vivo, and by this means organize and compact chromosomes. May achieve or facilitate chromosome segregation by condensation DNA from both sides of a centrally located replisome during cell division. The sequence is that of Chromosome partition protein MukB from Shigella dysenteriae serotype 1 (strain Sd197).